The chain runs to 350 residues: Peroxidase 10 (350 aa).

The N-terminal stretch at 1–27 is a signal peptide; the sequence is MDHKMSMYLFVSYLAIFTLFFKGFVSS. Intrachain disulfides connect cysteine 57–cysteine 137, cysteine 90–cysteine 95, cysteine 143–cysteine 346, and cysteine 222–cysteine 256. Histidine 88 functions as the Proton acceptor in the catalytic mechanism. Ca(2+) is bound by residues aspartate 89, valine 92, glycine 94, aspartate 96, and serine 98. N-linked (GlcNAc...) asparagine glycosylation is present at asparagine 102. Proline 185 contributes to the substrate binding site. An N-linked (GlcNAc...) asparagine glycan is attached at asparagine 193. Histidine 215 contributes to the heme b binding site. Threonine 216 provides a ligand contact to Ca(2+). The Ca(2+) site is built by aspartate 270, serine 273, and aspartate 278.

It belongs to the peroxidase family. Classical plant (class III) peroxidase subfamily. Heme b serves as cofactor. The cofactor is Ca(2+). As to expression, expressed in the whole plant, with the highest expression in roots.

Its subcellular location is the secreted. The enzyme catalyses 2 a phenolic donor + H2O2 = 2 a phenolic radical donor + 2 H2O. Its function is as follows. Removal of H(2)O(2), oxidation of toxic reductants, biosynthesis and degradation of lignin, suberization, auxin catabolism, response to environmental stresses such as wounding, pathogen attack and oxidative stress. These functions might be dependent on each isozyme/isoform in each plant tissue. The polypeptide is Peroxidase 10 (PER10) (Arabidopsis thaliana (Mouse-ear cress)).